The following is a 764-amino-acid chain: Phosphoribosylformylglycinamidine synthase subunit PurL (764 aa).

The interval 1–23 (MTQEVDTVERAAATPDHPQPYRE) is disordered. The active site involves His57. ATP contacts are provided by Tyr60 and Lys104. Residue Glu106 coordinates Mg(2+). Substrate-binding positions include 107 to 110 (SHNH) and Arg129. The active-site Proton acceptor is the His108. Mg(2+) is bound at residue Asp130. Gln258 lines the substrate pocket. Mg(2+) is bound at residue Asp286. Residue 330–332 (ESQ) participates in substrate binding. Residues Asn518 and Gly555 each contribute to the ATP site. A Mg(2+)-binding site is contributed by Asn556. Ser558 is a binding site for substrate.

This sequence belongs to the FGAMS family. Monomer. Part of the FGAM synthase complex composed of 1 PurL, 1 PurQ and 2 PurS subunits.

Its subcellular location is the cytoplasm. The enzyme catalyses N(2)-formyl-N(1)-(5-phospho-beta-D-ribosyl)glycinamide + L-glutamine + ATP + H2O = 2-formamido-N(1)-(5-O-phospho-beta-D-ribosyl)acetamidine + L-glutamate + ADP + phosphate + H(+). The protein operates within purine metabolism; IMP biosynthesis via de novo pathway; 5-amino-1-(5-phospho-D-ribosyl)imidazole from N(2)-formyl-N(1)-(5-phospho-D-ribosyl)glycinamide: step 1/2. Part of the phosphoribosylformylglycinamidine synthase complex involved in the purines biosynthetic pathway. Catalyzes the ATP-dependent conversion of formylglycinamide ribonucleotide (FGAR) and glutamine to yield formylglycinamidine ribonucleotide (FGAM) and glutamate. The FGAM synthase complex is composed of three subunits. PurQ produces an ammonia molecule by converting glutamine to glutamate. PurL transfers the ammonia molecule to FGAR to form FGAM in an ATP-dependent manner. PurS interacts with PurQ and PurL and is thought to assist in the transfer of the ammonia molecule from PurQ to PurL. The sequence is that of Phosphoribosylformylglycinamidine synthase subunit PurL from Mycolicibacterium vanbaalenii (strain DSM 7251 / JCM 13017 / BCRC 16820 / KCTC 9966 / NRRL B-24157 / PYR-1) (Mycobacterium vanbaalenii).